We begin with the raw amino-acid sequence, 171 residues long: Ribosome maturation factor RimM (171 aa).

The 74-residue stretch at 97–170 (EGEYYYHEII…LVTIHVMEGL (74 aa)) folds into the PRC barrel domain.

It belongs to the RimM family. Binds ribosomal protein uS19.

The protein resides in the cytoplasm. Its function is as follows. An accessory protein needed during the final step in the assembly of 30S ribosomal subunit, possibly for assembly of the head region. Essential for efficient processing of 16S rRNA. May be needed both before and after RbfA during the maturation of 16S rRNA. It has affinity for free ribosomal 30S subunits but not for 70S ribosomes. The chain is Ribosome maturation factor RimM from Bacillus thuringiensis (strain Al Hakam).